A 243-amino-acid chain; its full sequence is Phosphoadenosine 5'-phosphosulfate reductase (243 aa).

The active-site Nucleophile; cysteine thiosulfonate intermediate is cysteine 239.

This sequence belongs to the PAPS reductase family. CysH subfamily.

It is found in the cytoplasm. It catalyses the reaction [thioredoxin]-disulfide + sulfite + adenosine 3',5'-bisphosphate + 2 H(+) = [thioredoxin]-dithiol + 3'-phosphoadenylyl sulfate. It participates in sulfur metabolism; hydrogen sulfide biosynthesis; sulfite from sulfate: step 3/3. In terms of biological role, catalyzes the formation of sulfite from phosphoadenosine 5'-phosphosulfate (PAPS) using thioredoxin as an electron donor. This Proteus mirabilis (strain HI4320) protein is Phosphoadenosine 5'-phosphosulfate reductase.